The following is a 293-amino-acid chain: 4-hydroxy-tetrahydrodipicolinate synthase (293 aa).

T45 lines the pyruvate pocket. Y133 serves as the catalytic Proton donor/acceptor. Catalysis depends on K162, which acts as the Schiff-base intermediate with substrate. I204 lines the pyruvate pocket.

This sequence belongs to the DapA family. As to quaternary structure, homotetramer; dimer of dimers.

Its subcellular location is the cytoplasm. It catalyses the reaction L-aspartate 4-semialdehyde + pyruvate = (2S,4S)-4-hydroxy-2,3,4,5-tetrahydrodipicolinate + H2O + H(+). Its pathway is amino-acid biosynthesis; L-lysine biosynthesis via DAP pathway; (S)-tetrahydrodipicolinate from L-aspartate: step 3/4. Catalyzes the condensation of (S)-aspartate-beta-semialdehyde [(S)-ASA] and pyruvate to 4-hydroxy-tetrahydrodipicolinate (HTPA). This is 4-hydroxy-tetrahydrodipicolinate synthase from Brucella abortus biovar 1 (strain 9-941).